A 265-amino-acid chain; its full sequence is Hydroxyethylthiazole kinase 2 (265 aa).

Methionine 39 contributes to the substrate binding site. 2 residues coordinate ATP: lysine 115 and threonine 168. Residue glycine 195 participates in substrate binding.

Belongs to the Thz kinase family. The cofactor is Mg(2+).

The catalysed reaction is 5-(2-hydroxyethyl)-4-methylthiazole + ATP = 4-methyl-5-(2-phosphooxyethyl)-thiazole + ADP + H(+). Its pathway is cofactor biosynthesis; thiamine diphosphate biosynthesis; 4-methyl-5-(2-phosphoethyl)-thiazole from 5-(2-hydroxyethyl)-4-methylthiazole: step 1/1. Functionally, catalyzes the phosphorylation of the hydroxyl group of 4-methyl-5-beta-hydroxyethylthiazole (THZ). The protein is Hydroxyethylthiazole kinase 2 of Clostridium botulinum (strain Kyoto / Type A2).